The sequence spans 124 residues: Urease subunit beta (124 aa).

The protein belongs to the urease beta subunit family. Heterotrimer of UreA (gamma), UreB (beta) and UreC (alpha) subunits. Three heterotrimers associate to form the active enzyme.

The protein resides in the cytoplasm. It catalyses the reaction urea + 2 H2O + H(+) = hydrogencarbonate + 2 NH4(+). The protein operates within nitrogen metabolism; urea degradation; CO(2) and NH(3) from urea (urease route): step 1/1. The chain is Urease subunit beta from Halalkalibacterium halodurans (strain ATCC BAA-125 / DSM 18197 / FERM 7344 / JCM 9153 / C-125) (Bacillus halodurans).